Reading from the N-terminus, the 238-residue chain is 2-C-methyl-D-erythritol 4-phosphate cytidylyltransferase (238 aa).

Belongs to the IspD/TarI cytidylyltransferase family. IspD subfamily.

It carries out the reaction 2-C-methyl-D-erythritol 4-phosphate + CTP + H(+) = 4-CDP-2-C-methyl-D-erythritol + diphosphate. It functions in the pathway isoprenoid biosynthesis; isopentenyl diphosphate biosynthesis via DXP pathway; isopentenyl diphosphate from 1-deoxy-D-xylulose 5-phosphate: step 2/6. Functionally, catalyzes the formation of 4-diphosphocytidyl-2-C-methyl-D-erythritol from CTP and 2-C-methyl-D-erythritol 4-phosphate (MEP). The polypeptide is 2-C-methyl-D-erythritol 4-phosphate cytidylyltransferase (Pelotomaculum thermopropionicum (strain DSM 13744 / JCM 10971 / SI)).